The following is a 270-amino-acid chain: Formamidopyrimidine-DNA glycosylase (270 aa).

The active-site Schiff-base intermediate with DNA is proline 2. The Proton donor role is filled by glutamate 3. Lysine 58 serves as the catalytic Proton donor; for beta-elimination activity. DNA contacts are provided by histidine 91, arginine 110, and arginine 151. Residues 236 to 270 (AVYGREGEPCTHCGAPLQGVRIGGRATIYCSQCQR) form an FPG-type zinc finger. Residue arginine 260 is the Proton donor; for delta-elimination activity of the active site.

It belongs to the FPG family. Monomer. Requires Zn(2+) as cofactor.

It catalyses the reaction Hydrolysis of DNA containing ring-opened 7-methylguanine residues, releasing 2,6-diamino-4-hydroxy-5-(N-methyl)formamidopyrimidine.. The enzyme catalyses 2'-deoxyribonucleotide-(2'-deoxyribose 5'-phosphate)-2'-deoxyribonucleotide-DNA = a 3'-end 2'-deoxyribonucleotide-(2,3-dehydro-2,3-deoxyribose 5'-phosphate)-DNA + a 5'-end 5'-phospho-2'-deoxyribonucleoside-DNA + H(+). Its function is as follows. Involved in base excision repair of DNA damaged by oxidation or by mutagenic agents. Acts as a DNA glycosylase that recognizes and removes damaged bases. Has a preference for oxidized purines, such as 7,8-dihydro-8-oxoguanine (8-oxoG). Has AP (apurinic/apyrimidinic) lyase activity and introduces nicks in the DNA strand. Cleaves the DNA backbone by beta-delta elimination to generate a single-strand break at the site of the removed base with both 3'- and 5'-phosphates. The chain is Formamidopyrimidine-DNA glycosylase from Acidithiobacillus ferrooxidans (strain ATCC 23270 / DSM 14882 / CIP 104768 / NCIMB 8455) (Ferrobacillus ferrooxidans (strain ATCC 23270)).